Here is a 259-residue protein sequence, read N- to C-terminus: Global transcriptional regulator CodY (259 aa).

The interval 1–155 is GAF domain; it reads MNLLEKTRKI…GATVVGMEIL (155 aa). Residues 203-222 constitute a DNA-binding region (H-T-H motif); sequence ASKIADRVGITRSVIVNALR. Ser215 carries the post-translational modification Phosphoserine.

It belongs to the CodY family.

The protein localises to the cytoplasm. Its function is as follows. DNA-binding global transcriptional regulator which is involved in the adaptive response to starvation and acts by directly or indirectly controlling the expression of numerous genes in response to nutrient availability. During rapid exponential growth, CodY is highly active and represses genes whose products allow adaptation to nutrient depletion. This is Global transcriptional regulator CodY from Geobacillus thermodenitrificans (strain NG80-2).